Reading from the N-terminus, the 367-residue chain is MKKQRIVVKIGSSSLADSHGGISKEQLSDHVAALARLKEEGHEVLLITSGAVAAGFSALGYPSRPVTIKGKQAAAAVGQSLLMQAYTEEFRKYGIVTAQLLLTRSDFSRKEQYSNAYATLGELLNRSALPIINENDSISLEELTFGDNDMLSALVSGLVSADMLMIFTDVNGLYDKNPQKNEDAKKYYFLPEVTEEIASLAGDAGSKLGTGGMKSKIDAAKTALSLGVSVFIGTGRGQEKFVDVLKGKGDGTYVGNAPQKEIKMNKQWIALHSVVSGQIEIDAGAATAIIQHGKSLLPAGVTNVSGFFKVGDVVEVMTQQGRVIGKGQCTYSAEELREIKGMQSQHIQARGERHNYEVIHRDHWVSL.

Position 9 (K9) interacts with ATP. S49, D136, and N148 together coordinate substrate. Residues 168–169 (TD) and 210–216 (TGGMKSK) each bind ATP. The PUA domain maps to 276 to 350 (SGQIEIDAGA…GMQSQHIQAR (75 aa)).

This sequence belongs to the glutamate 5-kinase family.

The protein resides in the cytoplasm. It carries out the reaction L-glutamate + ATP = L-glutamyl 5-phosphate + ADP. Its pathway is amino-acid biosynthesis; L-proline biosynthesis; L-glutamate 5-semialdehyde from L-glutamate: step 1/2. Functionally, catalyzes the transfer of a phosphate group to glutamate to form L-glutamate 5-phosphate. The polypeptide is Glutamate 5-kinase (Bacillus cereus (strain ATCC 10987 / NRS 248)).